A 236-amino-acid chain; its full sequence is Small ribosomal subunit protein uS3 (236 aa).

Positions 39–107 (VREFLKKKLA…PVHLNIEEVR (69 aa)) constitute a KH type-2 domain. The tract at residues 215–236 (AAQPAEPEKKVRKSGAKNAATS) is disordered.

This sequence belongs to the universal ribosomal protein uS3 family. As to quaternary structure, part of the 30S ribosomal subunit. Forms a tight complex with proteins S10 and S14.

In terms of biological role, binds the lower part of the 30S subunit head. Binds mRNA in the 70S ribosome, positioning it for translation. This chain is Small ribosomal subunit protein uS3, found in Methylobacillus flagellatus (strain ATCC 51484 / DSM 6875 / VKM B-1610 / KT).